The primary structure comprises 242 residues: Floral homeotic protein AGAMOUS (242 aa).

One can recognise an MADS-box domain in the interval R19–Y73. Residues A103–A193 enclose the K-box domain.

In terms of tissue distribution, flower. Preferentially expressed in stamen and carpel and weakly in petal. Undetected in leaves and roots.

The protein localises to the nucleus. Functionally, probable transcription factor involved in regulating genes that determines stamen and carpel development in wild-type flowers. In Panax ginseng (Korean ginseng), this protein is Floral homeotic protein AGAMOUS (AG2).